The following is a 394-amino-acid chain: Elongation factor Tu (394 aa).

The 195-residue stretch at 10 to 204 (KPHVNVGTIG…ALDRYIPTPE (195 aa)) folds into the tr-type G domain. The G1 stretch occupies residues 19 to 26 (GHVDHGKT). 19–26 (GHVDHGKT) serves as a coordination point for GTP. Thr26 is a Mg(2+) binding site. The G2 stretch occupies residues 60 to 64 (GITIN). Positions 81–84 (DCPG) are G3. Residues 81–85 (DCPGH) and 136–139 (NKCD) contribute to the GTP site. Residues 136 to 139 (NKCD) form a G4 region. The G5 stretch occupies residues 174-176 (SAL).

Belongs to the TRAFAC class translation factor GTPase superfamily. Classic translation factor GTPase family. EF-Tu/EF-1A subfamily. Monomer.

The protein localises to the cytoplasm. The enzyme catalyses GTP + H2O = GDP + phosphate + H(+). In terms of biological role, GTP hydrolase that promotes the GTP-dependent binding of aminoacyl-tRNA to the A-site of ribosomes during protein biosynthesis. In Neisseria gonorrhoeae, this protein is Elongation factor Tu.